The following is a 244-amino-acid chain: Protein-lysine methyltransferase METTL21E (244 aa).

The interval 1 to 20 (MDLTVTHITHKETYKEPRDD) is disordered. A compositionally biased stretch (basic and acidic residues) spans 9 to 18 (THKETYKEPR). S-adenosyl-L-methionine contacts are provided by residues Trp-69, 97 to 99 (GAG), Asp-118, Trp-149, and Ala-170.

This sequence belongs to the methyltransferase superfamily. METTL21 family.

Its function is as follows. Protein-lysine methyltransferase. The protein is Protein-lysine methyltransferase METTL21E (Mettl21e) of Mus musculus (Mouse).